The chain runs to 170 residues: ATP synthase subunit b (170 aa).

Residues 30-50 (FFFVLAIFLVVLAVIGTFVVP) traverse the membrane as a helical segment.

The protein belongs to the ATPase B chain family. As to quaternary structure, F-type ATPases have 2 components, F(1) - the catalytic core - and F(0) - the membrane proton channel. F(1) has five subunits: alpha(3), beta(3), gamma(1), delta(1), epsilon(1). F(0) has three main subunits: a(1), b(2) and c(10-14). The alpha and beta chains form an alternating ring which encloses part of the gamma chain. F(1) is attached to F(0) by a central stalk formed by the gamma and epsilon chains, while a peripheral stalk is formed by the delta and b chains.

Its subcellular location is the cell membrane. Its function is as follows. F(1)F(0) ATP synthase produces ATP from ADP in the presence of a proton or sodium gradient. F-type ATPases consist of two structural domains, F(1) containing the extramembraneous catalytic core and F(0) containing the membrane proton channel, linked together by a central stalk and a peripheral stalk. During catalysis, ATP synthesis in the catalytic domain of F(1) is coupled via a rotary mechanism of the central stalk subunits to proton translocation. Functionally, component of the F(0) channel, it forms part of the peripheral stalk, linking F(1) to F(0). In Mycobacterium marinum (strain ATCC BAA-535 / M), this protein is ATP synthase subunit b.